A 412-amino-acid polypeptide reads, in one-letter code: Putative pectate lyase 11 (412 aa).

Positions 1-24 (MVSYSNNHFAYAFLLLLTIGNTLA) are cleaved as a signal peptide. The Ca(2+) site is built by D210, D234, and D238. R290 is a catalytic residue.

The protein belongs to the polysaccharide lyase 1 family. It depends on Ca(2+) as a cofactor.

It catalyses the reaction Eliminative cleavage of (1-&gt;4)-alpha-D-galacturonan to give oligosaccharides with 4-deoxy-alpha-D-galact-4-enuronosyl groups at their non-reducing ends.. The protein operates within glycan metabolism; pectin degradation; 2-dehydro-3-deoxy-D-gluconate from pectin: step 2/5. The polypeptide is Putative pectate lyase 11 (Arabidopsis thaliana (Mouse-ear cress)).